We begin with the raw amino-acid sequence, 860 residues long: Leucine--tRNA ligase (860 aa).

The 'HIGH' region signature appears at 42 to 52 (PYPSGRLHMGH). Positions 619–623 (KMSKS) match the 'KMSKS' region motif. Residue Lys622 coordinates ATP.

The protein belongs to the class-I aminoacyl-tRNA synthetase family.

The protein localises to the cytoplasm. The catalysed reaction is tRNA(Leu) + L-leucine + ATP = L-leucyl-tRNA(Leu) + AMP + diphosphate. This Salmonella typhimurium (strain LT2 / SGSC1412 / ATCC 700720) protein is Leucine--tRNA ligase.